The sequence spans 283 residues: Probable protein phosphatase 2C 58 (283 aa).

The region spanning 35 to 282 (THGFHCVKGK…DDISCIVVKF (248 aa)) is the PPM-type phosphatase domain. Mn(2+)-binding residues include D72, G73, D234, and D273.

The protein belongs to the PP2C family. It depends on Mg(2+) as a cofactor. Mn(2+) is required as a cofactor.

The enzyme catalyses O-phospho-L-seryl-[protein] + H2O = L-seryl-[protein] + phosphate. It catalyses the reaction O-phospho-L-threonyl-[protein] + H2O = L-threonyl-[protein] + phosphate. In Arabidopsis thaliana (Mouse-ear cress), this protein is Probable protein phosphatase 2C 58.